The sequence spans 83 residues: Exodeoxyribonuclease 7 small subunit (83 aa).

It belongs to the XseB family. As to quaternary structure, heterooligomer composed of large and small subunits.

It is found in the cytoplasm. It catalyses the reaction Exonucleolytic cleavage in either 5'- to 3'- or 3'- to 5'-direction to yield nucleoside 5'-phosphates.. Functionally, bidirectionally degrades single-stranded DNA into large acid-insoluble oligonucleotides, which are then degraded further into small acid-soluble oligonucleotides. This Afipia carboxidovorans (strain ATCC 49405 / DSM 1227 / KCTC 32145 / OM5) (Oligotropha carboxidovorans) protein is Exodeoxyribonuclease 7 small subunit.